Here is a 129-residue protein sequence, read N- to C-terminus: Large ribosomal subunit protein bL12 (129 aa).

The protein belongs to the bacterial ribosomal protein bL12 family. In terms of assembly, homodimer. Part of the ribosomal stalk of the 50S ribosomal subunit. Forms a multimeric L10(L12)X complex, where L10 forms an elongated spine to which 2 to 4 L12 dimers bind in a sequential fashion. Binds GTP-bound translation factors.

Forms part of the ribosomal stalk which helps the ribosome interact with GTP-bound translation factors. Is thus essential for accurate translation. This Thermosipho melanesiensis (strain DSM 12029 / CIP 104789 / BI429) protein is Large ribosomal subunit protein bL12.